Consider the following 316-residue polypeptide: CD-NTase-associated protein 12 (316 aa).

The TIR domain occupies 4 to 121 (RIFIGSSSEG…MLGITQTRYE (118 aa)). The STING domain stretch occupies residues 161–316 (STVIAISYFE…ECVEIIEPQP (156 aa)). 3',3'-c-di-GMP-binding residues include Phe172, Pro237, and Asp253.

In the C-terminal section; belongs to the bacterial STING family. In terms of assembly, forms homodimers; in the presence of c-di-GMP forms filaments with an ordered array of parallel-stacked subunits.

It catalyses the reaction NAD(+) + H2O = ADP-D-ribose + nicotinamide + H(+). NAD(+) hydrolase activity is strongly stimulated by c-di-GMP, weakly by 3'3'-cGAMP, very weakly by c-di-AMP but not at all by 2'3'-cGAMP. Self-association of TIR domains is required for NADase activity. Functionally, effector protein of a CBASS antiviral system with NAD(+) hydrolase activity. CBASS (cyclic oligonucleotide-based antiphage signaling system) provides immunity against bacteriophage. The CD-NTase protein synthesizes cyclic nucleotides in response to infection; these serve as specific second messenger signals. The signals activate a diverse range of effectors, leading to bacterial cell death and thus abortive phage infection. A type I-D(GG) CBASS system. Binds c-di-GMP (synthesized by the cognate CdnE encoded upstream in the same operon) but not c-di-AMP, 2'-3'-cGAMP, 3'-3'-cGAMP or cUMP-AMP (tested without the N-terminal TIR domain). Upon activation by c-di-GMP forms filaments which hydrolyze NAD(+); filament formation is required for enzyme activation. The sequence is that of CD-NTase-associated protein 12 from Lachnospiraceae bacterium (strain RUG226).